The sequence spans 83 residues: MKLTCVLIVIMLFLTVCPLITADHSRDKQEHPAMRLKDRIRYLRRGKLTRDCKHQNDSCAEEGEECCSDLRCMTSGAGAICVT.

A signal peptide spans 1–22 (MKLTCVLIVIMLFLTVCPLITA). The propeptide occupies 23 to 49 (DHSRDKQEHPAMRLKDRIRYLRRGKLT). 3 disulfides stabilise this stretch: Cys52-Cys67, Cys59-Cys72, and Cys66-Cys81.

This sequence belongs to the conotoxin O1 superfamily. In terms of tissue distribution, expressed by the venom duct.

It is found in the secreted. This chain is Conotoxin MiEr92, found in Conus miles (Soldier cone).